We begin with the raw amino-acid sequence, 120 residues long: Large ribosomal subunit protein bL17 (120 aa).

The protein belongs to the bacterial ribosomal protein bL17 family. As to quaternary structure, part of the 50S ribosomal subunit. Contacts protein L32.

This chain is Large ribosomal subunit protein bL17, found in Mesomycoplasma hyopneumoniae (strain 7448) (Mycoplasma hyopneumoniae).